A 193-amino-acid polypeptide reads, in one-letter code: dCTP deaminase, dUMP-forming (193 aa).

DCTP-binding positions include 101 to 106 (KSSLGR), D119, 127 to 129 (TLE), Q148, Y162, and Q174. E129 acts as the Proton donor/acceptor in catalysis. Positions 161–184 (PYGSETTGSHYQGQRGPTPSRSYQ) are disordered.

It belongs to the dCTP deaminase family. In terms of assembly, homotrimer.

The enzyme catalyses dCTP + 2 H2O = dUMP + NH4(+) + diphosphate. Its pathway is pyrimidine metabolism; dUMP biosynthesis; dUMP from dCTP: step 1/1. Its function is as follows. Bifunctional enzyme that catalyzes both the deamination of dCTP to dUTP and the hydrolysis of dUTP to dUMP without releasing the toxic dUTP intermediate. In Bifidobacterium animalis subsp. lactis (strain AD011), this protein is dCTP deaminase, dUMP-forming.